Reading from the N-terminus, the 443-residue chain is Putative transporter AmpG 1 (443 aa).

Helical transmembrane passes span 6–26 (HVCIIIWLFGFISGFNIMITG), 43–63 (IGILSFITLPYSINFLLAPVF), 74–96 (ILGHRLSWICLTSTTLISLTSIL), 106–128 (VLLSFIAFIISFFSATQDTILSA), 144–164 (GIYIFGYRVGMLLASSGAIYL), 172–192 (KIYQIFACVIFVYLILLILVS), 255–275 (DISLAYFIVLILIFLVLYRLP), 300–320 (VCKFCGVIGAIIGGLIGGIIM), 326–346 (LYSILLFGIIHALSHILFILL), 355–375 (ILFITIGIESITGGMTMTAYI), 394–414 (LSSMMGISRSIFPIISGYMVV), and 416–436 (FGWQNFFLFTTIITIPSLLIL).

It belongs to the major facilitator superfamily.

It is found in the cell inner membrane. This chain is Putative transporter AmpG 1 (ampG1), found in Rickettsia typhi (strain ATCC VR-144 / Wilmington).